Reading from the N-terminus, the 817-residue chain is Protein EFR3 homolog B (817 aa).

S212, S214, and S216 each carry phosphoserine.

The protein belongs to the EFR3 family. As to quaternary structure, component of a phosphatidylinositol 4-kinase (PI4K) complex, composed of PI4KA, EFR3 (EFR3A or EFR3B), TTC7 (TTC7A or TTC7B) and HYCC (HYCC1 or HYCC2). Post-translationally, palmitoylated at its N-terminus, anchoring the protein to the plasma membrane.

The protein localises to the cell membrane. It is found in the cytoplasm. The protein resides in the cytosol. Component of a complex required to localize phosphatidylinositol 4-kinase (PI4K) to the plasma membrane. The complex acts as a regulator of phosphatidylinositol 4-phosphate (PtdIns(4)P) synthesis. In the complex, EFR3B probably acts as the membrane-anchoring component. Also involved in responsiveness to G-protein-coupled receptors; it is however unclear whether this role is direct or indirect. The protein is Protein EFR3 homolog B of Homo sapiens (Human).